The following is an 89-amino-acid chain: Small ribosomal subunit protein uS15 (89 aa).

It belongs to the universal ribosomal protein uS15 family. Part of the 30S ribosomal subunit. Forms a bridge to the 50S subunit in the 70S ribosome, contacting the 23S rRNA.

Functionally, one of the primary rRNA binding proteins, it binds directly to 16S rRNA where it helps nucleate assembly of the platform of the 30S subunit by binding and bridging several RNA helices of the 16S rRNA. Its function is as follows. Forms an intersubunit bridge (bridge B4) with the 23S rRNA of the 50S subunit in the ribosome. The polypeptide is Small ribosomal subunit protein uS15 (Gloeobacter violaceus (strain ATCC 29082 / PCC 7421)).